Reading from the N-terminus, the 494-residue chain is Fumigaclavine B O-acetyltransferase easN (494 aa).

The protein belongs to the fumigaclavine B O-acetyltransferase family. Monomer.

It carries out the reaction fumigaclavine B + acetyl-CoA = fumigaclavine A + CoA. Its pathway is alkaloid biosynthesis; ergot alkaloid biosynthesis. In terms of biological role, fumigaclavine B O-acetyltransferase; part of the gene cluster that mediates the biosynthesis of fumiclavanine C, a fungal ergot alkaloid. DmaW catalyzes the first step of ergot alkaloid biosynthesis by condensing dimethylallyl diphosphate (DMAP) and tryptophan to form 4-dimethylallyl-L-tryptophan. The second step is catalyzed by the methyltransferase easF that methylates 4-dimethylallyl-L-tryptophan in the presence of S-adenosyl-L-methionine, resulting in the formation of 4-dimethylallyl-L-abrine. The catalase easC and the FAD-dependent oxidoreductase easE then transform 4-dimethylallyl-L-abrine to chanoclavine-I which is further oxidized by EasD in the presence of NAD(+), resulting in the formation of chanoclavine-I aldehyde. EasA reduces chanoclavine-I aldehyde to dihydrochanoclavine-I aldehyde that spontaneously dehydrates to form 6,8-dimethyl-6,7-didehydroergoline. EasG then catalyzes the reduction of 6,8-dimethyl-6,7-didehydroergoline to form festuclavine. Hydrolysis of festuclavine by easM then leads to the formation of fumigaclavine B which is in turn acetylated by easN to fumigaclavine A. Finally, easL catalyzes the conversion of fumigaclavine A into fumigaclavine C by attaching a dimethylallyl moiety to C-2 of the indole nucleus. The chain is Fumigaclavine B O-acetyltransferase easN from Aspergillus fumigatus (strain ATCC MYA-4609 / CBS 101355 / FGSC A1100 / Af293) (Neosartorya fumigata).